The sequence spans 457 residues: Multidrug resistance protein MdtK (457 aa).

12 consecutive transmembrane segments (helical) span residues 11 to 31, 53 to 73, 93 to 113, 127 to 147, 160 to 180, 189 to 209, 243 to 263, 276 to 296, 314 to 334, 350 to 370, 387 to 407, and 418 to 438; these read LLALAIPVILAQIAQTAMGFV, IWLPAILFGHGLLLALTPVIA, WLAGFVSVLIMLVLWNAGYII, AVGYLRALLWGAPGYLFFQVA, GMVMGFIGLLVNIPVNYIFIY, GGVGCGVATAAVYWVMFLAMV, LPIALALFFEVTLFAVVALLV, IALNFSSLMFVLPMSLAAAVT, AARTGLMVGVCMATLTAIFTV, VVTLAAHLMLLAAVYQISDSI, IFYITFTAYWVLGLPSGYILA, and PAGFWIGFIIGLTSAAIMMML.

This sequence belongs to the multi antimicrobial extrusion (MATE) (TC 2.A.66.1) family. MdtK subfamily.

The protein resides in the cell inner membrane. Multidrug efflux pump that functions probably as a Na(+)/drug antiporter. The polypeptide is Multidrug resistance protein MdtK (Escherichia coli O127:H6 (strain E2348/69 / EPEC)).